The chain runs to 447 residues: Probable cytosol aminopeptidase (447 aa).

Positions 218 and 223 each coordinate Mn(2+). The active site involves lysine 230. Residues aspartate 241, aspartate 300, and glutamate 302 each coordinate Mn(2+). Residue arginine 304 is part of the active site.

Belongs to the peptidase M17 family. It depends on Mn(2+) as a cofactor.

Its subcellular location is the cytoplasm. The catalysed reaction is Release of an N-terminal amino acid, Xaa-|-Yaa-, in which Xaa is preferably Leu, but may be other amino acids including Pro although not Arg or Lys, and Yaa may be Pro. Amino acid amides and methyl esters are also readily hydrolyzed, but rates on arylamides are exceedingly low.. The enzyme catalyses Release of an N-terminal amino acid, preferentially leucine, but not glutamic or aspartic acids.. Its function is as follows. Presumably involved in the processing and regular turnover of intracellular proteins. Catalyzes the removal of unsubstituted N-terminal amino acids from various peptides. The polypeptide is Probable cytosol aminopeptidase (pepA) (Mycoplasma genitalium (strain ATCC 33530 / DSM 19775 / NCTC 10195 / G37) (Mycoplasmoides genitalium)).